Reading from the N-terminus, the 368-residue chain is DNA replication and repair protein RecF (368 aa).

30-37 (GNNAQGKT) provides a ligand contact to ATP.

Belongs to the RecF family.

Its subcellular location is the cytoplasm. Functionally, the RecF protein is involved in DNA metabolism; it is required for DNA replication and normal SOS inducibility. RecF binds preferentially to single-stranded, linear DNA. It also seems to bind ATP. In Streptococcus pyogenes serotype M5 (strain Manfredo), this protein is DNA replication and repair protein RecF.